A 125-amino-acid polypeptide reads, in one-letter code: 13 kDa ribonucleoprotein-associated protein (125 aa).

The protein belongs to the eukaryotic ribosomal protein eL8 family. As to quaternary structure, component of the U3 snoRNP particle. Binds to the C'/D and B/C motifs in U3 snoRNA. Component of the 25S U4/U6.U5 tri-snRNP particle, a subcomplex of the spliceosome. Binds to the 5' stem-loop of U4 snRNA.

It localises to the nucleus. The protein localises to the nucleolus. Functionally, common component of the spliceosome and rRNA processing machinery. In association with the spliceosomal U4/U6.U5 tri-snRNP particle, required for splicing of pre-mRNA. In association with box C/D snoRNPs, required for processing of pre-ribosomal RNA (rRNA) and site-specific 2'-O-methylation of substrate RNAs. Essential for the accumulation and stability of U4 snRNA, U6 snRNA, and box C/D snoRNAs. This chain is 13 kDa ribonucleoprotein-associated protein (snu13), found in Schizosaccharomyces pombe (strain 972 / ATCC 24843) (Fission yeast).